Consider the following 816-residue polypeptide: Leucine--tRNA ligase (816 aa).

Positions 40-51 (SYPSGSQLHAGH) match the 'HIGH' region motif. The 'KMSKS' region motif lies at 576–580 (KMSKS). An ATP-binding site is contributed by lysine 579.

The protein belongs to the class-I aminoacyl-tRNA synthetase family.

The protein localises to the cytoplasm. It catalyses the reaction tRNA(Leu) + L-leucine + ATP = L-leucyl-tRNA(Leu) + AMP + diphosphate. In Clostridium perfringens (strain SM101 / Type A), this protein is Leucine--tRNA ligase.